A 397-amino-acid polypeptide reads, in one-letter code: 42.8 kDa protein in whiE locus (397 aa).

Residues 1–22 (MTVSPVVATDAPSTDATRTTAT) are disordered. The span at 8–22 (ATDAPSTDATRTTAT) shows a compositional bias: low complexity. Residues 46–137 (VRVVLMLDVH…DTHSLRYSVL (92 aa)) form the ABM domain.

This sequence belongs to the SchA/CurD family.

This Streptomyces coelicolor (strain ATCC BAA-471 / A3(2) / M145) protein is 42.8 kDa protein in whiE locus.